The chain runs to 615 residues: MPIQVLPPQLANQIAAGEVVERPASVVKELVENSLDAGATRIDIDIERGGAKLIRIRDNGCGIKKDELALALARHATSKIASLDDLEAIISLGFRGEALASISSVSRLTLTSRTAEQQEAWQAYAEGRDMDVTVKPAAHPVGTTLEVLDLFYNTPARRKFLRTEKTEFNHIDEIIRRIALARFDVTINLSHNGKIVRQYRAVPEGGQKERRLGAICGTAFLEQALAIEWQHGDLTLRGWVADPNHTTPALAEIQYCYVNGRMMRDRLINHAIRQACEDKLGADQQPAFVLYLEIDPHQVDVNVHPAKHEVRFHQSRLVHDFIYQGVLSVLQQQLETPLPLDDEPQPAPRPIPENRVAAGRNHFAEPAVREPVAPRYTPAPASGSRPAAPWPNAQPGYQKQQGEVYRQLLQTPAPMQKPKAPEPQEPALAANSQSFGRVLTIVHSDCALLERDGNISLLALPVAERWLRQVQLTPGEAPVCAQPLLIPLRLKVSGEEKSALEKAQSALAELGIDFQSDAQHVTIRAVPLPLRQQNLQILIPELIGYLAKQSVFEPGNIAQWIARNLMSEHAQWSMAQAITLLADVERLCPQLVKTPPGGLLQSVDLHPAIKALKDE.

The segment at 363–397 is disordered; the sequence is FAEPAVREPVAPRYTPAPASGSRPAAPWPNAQPGY. A compositionally biased stretch (low complexity) spans 378–391; the sequence is PAPASGSRPAAPWP.

It belongs to the DNA mismatch repair MutL/HexB family.

Its function is as follows. This protein is involved in the repair of mismatches in DNA. It is required for dam-dependent methyl-directed DNA mismatch repair. May act as a 'molecular matchmaker', a protein that promotes the formation of a stable complex between two or more DNA-binding proteins in an ATP-dependent manner without itself being part of a final effector complex. This Escherichia coli O157:H7 (strain EC4115 / EHEC) protein is DNA mismatch repair protein MutL.